The sequence spans 614 residues: Vitamin B12 transporter BtuB (614 aa).

An N-terminal signal peptide occupies residues Met1–Ala20. The TonB box motif lies at Asp26–Asn33. Residues Pro38–Thr152 enclose the TBDR plug domain. Residues Ser85, Asn92, and Val110–Ser111 each bind cyanocob(III)alamin. Residues Asn155–Phe614 form the TBDR beta-barrel domain. Beta stranded transmembrane passes span Thr158–Gly165, Tyr169–Gln178, and Thr184–Thr195. 4 residues coordinate Ca(2+): Asp199, Gln211, Asp213, and Asp215. Transmembrane regions (beta stranded) follow at residues Phe217 to Glu227 and Asp232 to Asp248. Positions 249 and 250 each coordinate Ca(2+). Position 251 (Ala251) interacts with cyanocob(III)alamin. Asp261 provides a ligand contact to Ca(2+). The next 14 beta stranded transmembrane spans lie at Arg263 to Asn277, Glu279 to Asn296, Thr309 to Val325, His328 to Trp337, Tyr353 to Gly369, Phe371 to Asp381, Phe385 to Ile400, Tyr403 to Asn417, Lys434 to Glu443, Val449 to Asn458, Tyr473 to Phe490, Pro494 to Ala509, Arg517 to Trp529, and Asp535 to Asp550. Thr309 serves as a coordination point for cyanocob(III)alamin. Arg517 lines the cyanocob(III)alamin pocket. Tyr551 is a cyanocob(III)alamin binding site. The next 3 membrane-spanning stretches (beta stranded) occupy residues Thr558–Ala572, Ile585–Val596, and Ala602–Phe614. The TonB C-terminal box signature appears at Tyr597–Phe614.

The protein belongs to the TonB-dependent receptor family. BtuB (TC 1.B.14.3.1) subfamily.

The protein resides in the cell outer membrane. Functionally, involved in the active translocation of vitamin B12 (cyanocobalamin) across the outer membrane to the periplasmic space. It derives its energy for transport by interacting with the trans-periplasmic membrane protein TonB. This is Vitamin B12 transporter BtuB from Salmonella choleraesuis (strain SC-B67).